Reading from the N-terminus, the 185-residue chain is Hypoxanthine/guanine phosphoribosyltransferase (185 aa).

It belongs to the purine/pyrimidine phosphoribosyltransferase family. Archaeal HPRT subfamily. As to quaternary structure, homodimer.

The protein resides in the cytoplasm. The enzyme catalyses IMP + diphosphate = hypoxanthine + 5-phospho-alpha-D-ribose 1-diphosphate. It catalyses the reaction GMP + diphosphate = guanine + 5-phospho-alpha-D-ribose 1-diphosphate. It functions in the pathway purine metabolism; IMP biosynthesis via salvage pathway; IMP from hypoxanthine: step 1/1. Catalyzes a salvage reaction resulting in the formation of IMP that is energically less costly than de novo synthesis. This chain is Hypoxanthine/guanine phosphoribosyltransferase, found in Aciduliprofundum boonei (strain DSM 19572 / T469).